A 530-amino-acid polypeptide reads, in one-letter code: Feruloyl esterase C (530 aa).

A signal peptide spans 1 to 25 (MMLTSAILLLTLGVQLSHADDSSRE). 6 cysteine pairs are disulfide-bonded: Cys31-Cys78, Cys66-Cys117, Cys190-Cys444, Cys259-Cys276, Cys285-Cys294, and Cys506-Cys528. Residue Ser191 is the Acyl-ester intermediate of the active site. Residues Asp260, Asp263, Ala265, Asp267, and Val269 each coordinate Ca(2+). Residues Asp403 and His443 each act as charge relay system in the active site.

This sequence belongs to the tannase family.

It is found in the secreted. The catalysed reaction is feruloyl-polysaccharide + H2O = ferulate + polysaccharide.. In terms of biological role, involved in degradation of plant cell walls. Hydrolyzes the feruloyl-arabinose ester bond in arabinoxylans as well as the feruloyl-galactose and feruloyl-arabinose ester bonds in pectin. Active against methyl esters of sinapate (MSA) and caffeate (MCA). This chain is Feruloyl esterase C (faeC), found in Talaromyces stipitatus (strain ATCC 10500 / CBS 375.48 / QM 6759 / NRRL 1006) (Penicillium stipitatum).